A 208-amino-acid chain; its full sequence is Putative ribosomal protein uS2-like (208 aa).

Belongs to the universal ribosomal protein uS2 family.

The protein localises to the plastid. The protein resides in the chloroplast. This chain is Putative ribosomal protein uS2-like (rps2-2), found in Chlamydomonas reinhardtii (Chlamydomonas smithii).